Consider the following 366-residue polypeptide: Histidinol-phosphate aminotransferase (366 aa).

Lysine 228 carries the post-translational modification N6-(pyridoxal phosphate)lysine.

This sequence belongs to the class-II pyridoxal-phosphate-dependent aminotransferase family. Histidinol-phosphate aminotransferase subfamily. As to quaternary structure, homodimer. Pyridoxal 5'-phosphate is required as a cofactor.

It catalyses the reaction L-histidinol phosphate + 2-oxoglutarate = 3-(imidazol-4-yl)-2-oxopropyl phosphate + L-glutamate. Its pathway is amino-acid biosynthesis; L-histidine biosynthesis; L-histidine from 5-phospho-alpha-D-ribose 1-diphosphate: step 7/9. The sequence is that of Histidinol-phosphate aminotransferase from Corynebacterium glutamicum (strain R).